The chain runs to 246 residues: uncharacterized protein (246 aa).

This is an uncharacterized protein from Methanocaldococcus jannaschii (strain ATCC 43067 / DSM 2661 / JAL-1 / JCM 10045 / NBRC 100440) (Methanococcus jannaschii).